Reading from the N-terminus, the 39-residue chain is Antimicrobial peptide CHP1 (39 aa).

3 disulfides stabilise this stretch: cysteine 6–cysteine 28, cysteine 13–cysteine 34, and cysteine 18–cysteine 35.

Its function is as follows. Bactericidal activity; inhibits S.aureus and E.coli. In Gallus gallus (Chicken), this protein is Antimicrobial peptide CHP1.